The chain runs to 145 residues: Halilectin 3, alpha chain (145 aa).

N73 is a glycosylation site (N-linked (GlcNAc...) asparagine).

Probable heterotrimer consisting of an alpha chain and two beta chains. The alpha chain can probably have different glycosylation states. Glycosylated.

In terms of biological role, lectin with affinity for N-acetyl-galactosamine, carragenan and glycoprotein porcine stomach mucin (PSM). Has metal-independent hemagglutinating activity towards erythrocytes from rabbit and human. Hemagglutinating activity is not inhibited by D-galactose, D-glucose, D-mannose, D-fucose, methyl-alpha-D-galactopyranoside, methyl-alpha-D-glucopyranoside, N-acetyl-glucosamine, N-acetyl-mannosamine, D-fructose, alpha-D-lactose, beta-D-lactose, D-lactulose, D-sucrose, fucoidan or glycoproteins thyroglobulin and ovalmucoid. This Haliclona caerulea (Blue Caribbean sponge) protein is Halilectin 3, alpha chain.